The sequence spans 512 residues: Cytochrome P450 26B1 (512 aa).

Heme is bound at residue Cys441.

This sequence belongs to the cytochrome P450 family. It depends on heme as a cofactor.

The protein localises to the endoplasmic reticulum membrane. Its subcellular location is the microsome membrane. The catalysed reaction is all-trans-retinoate + reduced [NADPH--hemoprotein reductase] + O2 = all-trans-4-hydroxyretinoate + oxidized [NADPH--hemoprotein reductase] + H2O + H(+). The enzyme catalyses all-trans-retinoate + reduced [NADPH--hemoprotein reductase] + O2 = all-trans-18-hydroxyretinoate + oxidized [NADPH--hemoprotein reductase] + H2O + H(+). Its function is as follows. A cytochrome P450 monooxygenase involved in the metabolism of retinoates (RAs), the active metabolites of vitamin A, and critical signaling molecules in animals. RAs exist as at least four different isomers: all-trans-RA (atRA), 9-cis-RA, 13-cis-RA, and 9,13-dicis-RA, where atRA is considered to be the biologically active isomer, although 9-cis-RA and 13-cis-RA also have activity. Catalyzes the hydroxylation of atRA primarily at C-4 and C-18, thereby contributing to the regulation of atRA homeostasis and signaling. Hydroxylation of atRA limits its biological activity and initiates a degradative process leading to its eventual elimination. Involved in the convertion of atRA to all-trans-4-oxo-RA. Can oxidize all-trans-13,14-dihydroretinoate (DRA) to metabolites which could include all-trans-4-oxo-DRA, all-trans-4-hydroxy-DRA, all-trans-5,8-epoxy-DRA, and all-trans-18-hydroxy-DRA. Shows preference for the following substrates: atRA &gt; 9-cis-RA &gt; 13-cis-RA. Plays a central role in germ cell development: acts by degrading RAs in the developing testis, preventing STRA8 expression, thereby leading to delay of meiosis. Required for the maintenance of the undifferentiated state of male germ cells during embryonic development in Sertoli cells, inducing arrest in G0 phase of the cell cycle and preventing meiotic entry. Plays a role in skeletal development, both at the level of patterning and in the ossification of bone and the establishment of some synovial joints. Essential for postnatal survival. Functionally, also has a significant activity in oxidation of tazarotenic acid and may therefore metabolize that xenobiotic in vivo. The sequence is that of Cytochrome P450 26B1 (Cyp26b1) from Rattus norvegicus (Rat).